We begin with the raw amino-acid sequence, 488 residues long: N-succinylglutamate 5-semialdehyde dehydrogenase (488 aa).

221-226 is an NAD(+) binding site; that stretch reads GSSRTG. Active-site residues include glutamate 244 and cysteine 278.

It belongs to the aldehyde dehydrogenase family. AstD subfamily.

It catalyses the reaction N-succinyl-L-glutamate 5-semialdehyde + NAD(+) + H2O = N-succinyl-L-glutamate + NADH + 2 H(+). The protein operates within amino-acid degradation; L-arginine degradation via AST pathway; L-glutamate and succinate from L-arginine: step 4/5. In terms of biological role, catalyzes the NAD-dependent reduction of succinylglutamate semialdehyde into succinylglutamate. The sequence is that of N-succinylglutamate 5-semialdehyde dehydrogenase from Pseudomonas fluorescens (strain Pf0-1).